The following is a 429-amino-acid chain: Ribosomal RNA small subunit methyltransferase B (429 aa).

Residues 254–260 (CAAPGGK), Asp277, Asp303, and Asp322 contribute to the S-adenosyl-L-methionine site. Cys375 functions as the Nucleophile in the catalytic mechanism.

This sequence belongs to the class I-like SAM-binding methyltransferase superfamily. RsmB/NOP family.

Its subcellular location is the cytoplasm. The catalysed reaction is cytidine(967) in 16S rRNA + S-adenosyl-L-methionine = 5-methylcytidine(967) in 16S rRNA + S-adenosyl-L-homocysteine + H(+). Specifically methylates the cytosine at position 967 (m5C967) of 16S rRNA. This is Ribosomal RNA small subunit methyltransferase B from Shigella boydii serotype 4 (strain Sb227).